The following is a 176-amino-acid chain: NAD(P)H-quinone oxidoreductase subunit 6, chloroplastic (176 aa).

5 helical membrane-spanning segments follow: residues Ile-10–Thr-30, Ile-33–Leu-53, Val-60–Phe-80, Ile-95–Ile-115, and Phe-152–Thr-172.

This sequence belongs to the complex I subunit 6 family. As to quaternary structure, NDH is composed of at least 16 different subunits, 5 of which are encoded in the nucleus.

The protein localises to the plastid. The protein resides in the chloroplast thylakoid membrane. The enzyme catalyses a plastoquinone + NADH + (n+1) H(+)(in) = a plastoquinol + NAD(+) + n H(+)(out). It catalyses the reaction a plastoquinone + NADPH + (n+1) H(+)(in) = a plastoquinol + NADP(+) + n H(+)(out). NDH shuttles electrons from NAD(P)H:plastoquinone, via FMN and iron-sulfur (Fe-S) centers, to quinones in the photosynthetic chain and possibly in a chloroplast respiratory chain. The immediate electron acceptor for the enzyme in this species is believed to be plastoquinone. Couples the redox reaction to proton translocation, and thus conserves the redox energy in a proton gradient. This is NAD(P)H-quinone oxidoreductase subunit 6, chloroplastic (ndhG) from Zea mays (Maize).